Reading from the N-terminus, the 310-residue chain is Glutaminase (310 aa).

Substrate-binding residues include Ser66, Asn117, Glu161, Asn168, Tyr192, Tyr244, and Val262.

This sequence belongs to the glutaminase family. Homotetramer.

The enzyme catalyses L-glutamine + H2O = L-glutamate + NH4(+). The polypeptide is Glutaminase (Shigella boydii serotype 4 (strain Sb227)).